The following is a 927-amino-acid chain: MDHRAQAREVFVRAQLEAVQKAITKNEVPLKPKHARTIIVGTHKEKSSGIFWHTVGRIQLEKHPVLTWKFCHLVHKLLRDGHRKVPEETYRYVNRFTQLSQFWKHLNTSGYGPCIESYCKLLHDRVTFHNKYPVVPGKLDLNDSQLKTLEGDLDNMFEMTIDMLDQMDALLVLQDRVYEMMNSLRWNSLIPQGQCMLSPLIIAILDTSKFYDYLVKMIFKLHSQVPPDALEGHRSRFRTIFERTKKFYEESSNLQYFKYLVSIPTLPSHAPNFLQQSDLESYRTPHAYLHSEGSEDGTSLNGHDGELLNLAEAEPQQASPSSQPDPREEQIVMLSRAVEDEKFAKERLIQEARSRIEQYENRLLQMQGEFDHAKREADENREEAQRLKNELALRDASRTQTDDARVKEAELKATAAEERFNKMKGVYEKFRSEHVLALTKLGDIQKQLEASEKSKFDKDEEITALNRKVEEAQREAGRALTKAEGDAGAVDEMRTQLVKADIEVEELKRTIDHLRESHANQLVQSSAEETNKIRLAELEVAKESGVGITQMFDHCEDALQNATSITYPPHLAQSAMNNLVNILSNERLDEPLATKDNVFAGHLLSTTLSAAASAAYTASIESYEGVNDQCKKVLAAAKVAFSDDSALSRADKMKLLRQDIQTLNSLMISLPLQTDIDKDVVGNELEQEMRRMDDAIRRAVQEIEAIQRRARESSDGIRLEVNESILANCQALMSVIMQLVIASRELQTEIVAAGKAGGSPAEFYKRNHQWTEGLLSAAKAVGVAARVLVESADGVVTGKGKFEHLIVAAQEIAASTAQLFVSSRVKADKDSSKLDALSVAAKAVNQNTAQVVAAVKNGQTTLNDEGSLDFSYLSLHAAKKEEMESQVKMLELEQSLNQERAKLAALRKQHYHMAQLVANKEGEEAQE.

The ENTH domain occupies 7–136 (AREVFVRAQL…TFHNKYPVVP (130 aa)). A coiled-coil region spans residues 336-524 (RAVEDEKFAK…RESHANQLVQ (189 aa)). One can recognise an I/LWEQ domain in the interval 673 to 914 (QTDIDKDVVG…ALRKQHYHMA (242 aa)).

This sequence belongs to the SLA2 family.

It is found in the cytoplasm. Its subcellular location is the cytoskeleton. Its function is as follows. Regulates pre-synaptic vesicle recycling at neuromuscular junctions of mechanosensory neurons. Plays a role in maintaining a normal defecation cycle. The polypeptide is Huntington interacting protein related 1 (hipr-1) (Caenorhabditis elegans).